The sequence spans 1577 residues: Hemolysin (1577 aa).

Residues 1 to 29 (MKSKNFKLSPSGRLAASLAIIFVSLNAYG) form the signal peptide. A compositionally biased stretch (basic and acidic residues) spans 437-446 (EKESRSENGN). Disordered stretches follow at residues 437-467 (EKES…QTET), 1081-1103 (TDTH…GTTP), 1169-1188 (QSAS…GVQA), and 1213-1232 (KQDE…SGNL). 3 stretches are compositionally biased toward polar residues: residues 454–467 (LESG…QTET), 1081–1095 (TDTH…NGSA), and 1169–1184 (QSAS…NLSG).

It is found in the cell outer membrane. In terms of biological role, bacterial hemolysins are exotoxins that attack blood cell membranes and cause cell rupture by mechanisms not clearly defined. Functionally, cell-bound hemolysin, which releases heme-iron from erythrocytes by interaction with the erythrocyte membrane. HpmA requires HpmB function. This Proteus mirabilis protein is Hemolysin (hpmA).